The sequence spans 662 residues: UPF0313 protein CPF_1407 (662 aa).

Residues 296–567 (AIEEVKFSIV…AMQRALLQFK (272 aa)) enclose the Radical SAM core domain. [4Fe-4S] cluster-binding residues include Cys-310, Cys-314, and Cys-317. The segment at 596–662 (IRDKNSFGKG…QRSSKGKKRR (67 aa)) is disordered. The span at 618-632 (SRNENSGRRESEDKK) shows a compositional bias: basic and acidic residues. Residues 633–644 (RSSHSKKQRGNK) are compositionally biased toward basic residues.

This sequence belongs to the UPF0313 family. [4Fe-4S] cluster serves as cofactor.

The protein is UPF0313 protein CPF_1407 of Clostridium perfringens (strain ATCC 13124 / DSM 756 / JCM 1290 / NCIMB 6125 / NCTC 8237 / Type A).